The chain runs to 486 residues: NADH-quinone oxidoreductase subunit N (486 aa).

13 helical membrane-spanning segments follow: residues 5–25 (IGLS…ASLL), 41–61 (LITL…LVVF), 77–97 (GVTQ…MVMM), 118–138 (SAVG…FIGL), 165–185 (YFIL…FIFG), 209–229 (FLFG…IAPF), 245–265 (TAFM…RIIA), 275–295 (LFDI…AAAI), 304–324 (IAYS…TAGV), 335–355 (VIFY…IAAM), 380–400 (ALCL…LGFF), 413–433 (GLLW…YYYL), and 458–478 (VTAV…GPIF).

This sequence belongs to the complex I subunit 2 family. NDH-1 is composed of 14 different subunits. Subunits NuoA, H, J, K, L, M, N constitute the membrane sector of the complex.

The protein localises to the cell inner membrane. The enzyme catalyses a quinone + NADH + 5 H(+)(in) = a quinol + NAD(+) + 4 H(+)(out). Functionally, NDH-1 shuttles electrons from NADH, via FMN and iron-sulfur (Fe-S) centers, to quinones in the respiratory chain. The immediate electron acceptor for the enzyme in this species is believed to be ubiquinone. Couples the redox reaction to proton translocation (for every two electrons transferred, four hydrogen ions are translocated across the cytoplasmic membrane), and thus conserves the redox energy in a proton gradient. The protein is NADH-quinone oxidoreductase subunit N of Bdellovibrio bacteriovorus (strain ATCC 15356 / DSM 50701 / NCIMB 9529 / HD100).